The sequence spans 230 residues: Flagellar L-ring protein (230 aa).

Residues methionine 1 to threonine 15 form the signal peptide. Cysteine 16 carries the N-palmitoyl cysteine lipid modification. Cysteine 16 is lipidated: S-diacylglycerol cysteine.

Belongs to the FlgH family. In terms of assembly, the basal body constitutes a major portion of the flagellar organelle and consists of four rings (L,P,S, and M) mounted on a central rod.

The protein resides in the cell outer membrane. It localises to the bacterial flagellum basal body. Assembles around the rod to form the L-ring and probably protects the motor/basal body from shearing forces during rotation. The chain is Flagellar L-ring protein from Xanthomonas oryzae pv. oryzae (strain MAFF 311018).